The following is a 202-amino-acid chain: Histone H1 (202 aa).

Disordered regions lie at residues 1 to 50 and 114 to 202; these read MTAI…VTHP and YKLS…KIAV. The span at 18-38 shows a compositional bias: basic and acidic residues; the sequence is EASKVKEQAPATDKKPRAPKE. The region spanning 48 to 118 is the H15 domain; that stretch reads THPPYFQMIK…KIKASYKLSE (71 aa). The segment covering 160–202 has biased composition (basic residues); the sequence is KAKATPKPKKVGAKRTRKSTPAKAKQPKSIKSPAAKRAKKIAV.

This sequence belongs to the histone H1/H5 family.

The protein localises to the nucleus. It is found in the chromosome. In terms of biological role, histones H1 are necessary for the condensation of nucleosome chains into higher-order structures. The polypeptide is Histone H1 (Solanum pennellii (Tomato)).